Here is a 359-residue protein sequence, read N- to C-terminus: 3-isopropylmalate dehydrogenase (359 aa).

Residue 76 to 89 (GPKWDDPSAKTRPE) participates in NAD(+) binding. Residues arginine 96, arginine 106, arginine 134, and aspartate 223 each coordinate substrate. Mg(2+) contacts are provided by aspartate 223, aspartate 247, and aspartate 251. Position 281 to 293 (281 to 293 (GSAPDIAGKSVAN)) interacts with NAD(+).

This sequence belongs to the isocitrate and isopropylmalate dehydrogenases family. LeuB type 1 subfamily. Homodimer. It depends on Mg(2+) as a cofactor. Mn(2+) is required as a cofactor.

The protein resides in the cytoplasm. It catalyses the reaction (2R,3S)-3-isopropylmalate + NAD(+) = 4-methyl-2-oxopentanoate + CO2 + NADH. Its pathway is amino-acid biosynthesis; L-leucine biosynthesis; L-leucine from 3-methyl-2-oxobutanoate: step 3/4. Its function is as follows. Catalyzes the oxidation of 3-carboxy-2-hydroxy-4-methylpentanoate (3-isopropylmalate) to 3-carboxy-4-methyl-2-oxopentanoate. The product decarboxylates to 4-methyl-2 oxopentanoate. The chain is 3-isopropylmalate dehydrogenase from Rhodopirellula baltica (strain DSM 10527 / NCIMB 13988 / SH1).